We begin with the raw amino-acid sequence, 222 residues long: Glutathione S-transferase 3 (222 aa).

The 82-residue stretch at 2 to 83 (APLKLYGMPL…YIASKYASEG (82 aa)) folds into the GST N-terminal domain. Residues S12, 13 to 14 (PN), 41 to 42 (HK), 54 to 55 (QI), and 67 to 68 (ES) contribute to the glutathione site. A GST C-terminal domain is found at 89 to 219 (ATASAAKLEV…AAIPLPPPPS (131 aa)).

This sequence belongs to the GST superfamily. Phi family. Homodimer.

It catalyses the reaction RX + glutathione = an S-substituted glutathione + a halide anion + H(+). In terms of biological role, conjugation of reduced glutathione to a wide number of exogenous and endogenous hydrophobic electrophiles. Involved in the detoxification of certain herbicides. The sequence is that of Glutathione S-transferase 3 from Zea mays (Maize).